Consider the following 223-residue polypeptide: Pyridoxine/pyridoxamine 5'-phosphate oxidase (223 aa).

Residues 13–16 (RKNY) and Lys-73 contribute to the substrate site. Residues 68–73 (RIVLLK), 83–84 (YT), Lys-90, and Gln-112 contribute to the FMN site. Substrate is bound by residues Tyr-130, Arg-134, and Ser-138. Residues 147 to 148 (QS) and Trp-193 contribute to the FMN site. 199 to 201 (RLH) is a substrate binding site. Arg-203 is an FMN binding site.

The protein belongs to the pyridoxamine 5'-phosphate oxidase family. In terms of assembly, homodimer. It depends on FMN as a cofactor.

It carries out the reaction pyridoxamine 5'-phosphate + O2 + H2O = pyridoxal 5'-phosphate + H2O2 + NH4(+). The enzyme catalyses pyridoxine 5'-phosphate + O2 = pyridoxal 5'-phosphate + H2O2. Its pathway is cofactor metabolism; pyridoxal 5'-phosphate salvage; pyridoxal 5'-phosphate from pyridoxamine 5'-phosphate: step 1/1. It participates in cofactor metabolism; pyridoxal 5'-phosphate salvage; pyridoxal 5'-phosphate from pyridoxine 5'-phosphate: step 1/1. Functionally, catalyzes the oxidation of either pyridoxine 5'-phosphate (PNP) or pyridoxamine 5'-phosphate (PMP) into pyridoxal 5'-phosphate (PLP). The polypeptide is Pyridoxine/pyridoxamine 5'-phosphate oxidase (Rhodopirellula baltica (strain DSM 10527 / NCIMB 13988 / SH1)).